The following is a 322-amino-acid chain: 4-hydroxythreonine-4-phosphate dehydrogenase (322 aa).

T132 provides a ligand contact to substrate. A divalent metal cation-binding residues include H160, H205, and H260. Substrate-binding residues include K268, N277, and R286.

This sequence belongs to the PdxA family. As to quaternary structure, homodimer. The cofactor is Zn(2+). Mg(2+) serves as cofactor. Requires Co(2+) as cofactor.

The protein resides in the cytoplasm. The catalysed reaction is 4-(phosphooxy)-L-threonine + NAD(+) = 3-amino-2-oxopropyl phosphate + CO2 + NADH. It functions in the pathway cofactor biosynthesis; pyridoxine 5'-phosphate biosynthesis; pyridoxine 5'-phosphate from D-erythrose 4-phosphate: step 4/5. Catalyzes the NAD(P)-dependent oxidation of 4-(phosphooxy)-L-threonine (HTP) into 2-amino-3-oxo-4-(phosphooxy)butyric acid which spontaneously decarboxylates to form 3-amino-2-oxopropyl phosphate (AHAP). This chain is 4-hydroxythreonine-4-phosphate dehydrogenase, found in Xanthomonas campestris pv. campestris (strain B100).